A 258-amino-acid chain; its full sequence is Glucose 1-dehydrogenase 2 (258 aa).

Position 11-35 (11-35) interacts with NADP(+); the sequence is IVTGSSKGIGKAIAERFGKEKMNVV. S146 contacts substrate. Residue Y159 is the Proton acceptor of the active site.

It belongs to the short-chain dehydrogenases/reductases (SDR) family. As to quaternary structure, homotetramer.

It carries out the reaction D-glucose + NAD(+) = D-glucono-1,5-lactone + NADH + H(+). The enzyme catalyses D-glucose + NADP(+) = D-glucono-1,5-lactone + NADPH + H(+). The polypeptide is Glucose 1-dehydrogenase 2 (ycdF) (Bacillus subtilis (strain 168)).